The following is a 525-amino-acid chain: NAD(P)H-quinone oxidoreductase chain 4 1 (525 aa).

Transmembrane regions (helical) follow at residues 6 to 26 (FPWL…IPII), 36 to 56 (WYAL…FYTS), 91 to 111 (LIIL…PVTL), 115 to 135 (LFYF…AVQD), 136 to 156 (LLLF…LLAI), 169 to 189 (FILY…TMAF), 212 to 232 (LLLY…IPLH), 243 to 263 (TAPA…YALI), 277 to 297 (FAPV…LTSF), 314 to 334 (MGFV…GAVL), 335 to 355 (QMVS…ATYD), 375 to 397 (IFAM…GFVA), 417 to 437 (VIVV…LLSM), and 464 to 484 (VFVI…PKLL).

This sequence belongs to the complex I subunit 4 family.

It is found in the cellular thylakoid membrane. It catalyses the reaction a plastoquinone + NADH + (n+1) H(+)(in) = a plastoquinol + NAD(+) + n H(+)(out). The catalysed reaction is a plastoquinone + NADPH + (n+1) H(+)(in) = a plastoquinol + NADP(+) + n H(+)(out). In terms of biological role, NDH-1 shuttles electrons from NAD(P)H, via FMN and iron-sulfur (Fe-S) centers, to quinones in the respiratory chain. The immediate electron acceptor for the enzyme in this species is believed to be plastoquinone. Couples the redox reaction to proton translocation (for every two electrons transferred, four hydrogen ions are translocated across the cytoplasmic membrane), and thus conserves the redox energy in a proton gradient. This Trichormus variabilis (strain ATCC 29413 / PCC 7937) (Anabaena variabilis) protein is NAD(P)H-quinone oxidoreductase chain 4 1.